We begin with the raw amino-acid sequence, 227 residues long: NAD(P)H-quinone oxidoreductase subunit K, chloroplastic (227 aa).

4 residues coordinate [4Fe-4S] cluster: C43, C44, C108, and C139.

It belongs to the complex I 20 kDa subunit family. As to quaternary structure, NDH is composed of at least 16 different subunits, 5 of which are encoded in the nucleus. The cofactor is [4Fe-4S] cluster.

The protein resides in the plastid. The protein localises to the chloroplast thylakoid membrane. The catalysed reaction is a plastoquinone + NADH + (n+1) H(+)(in) = a plastoquinol + NAD(+) + n H(+)(out). It carries out the reaction a plastoquinone + NADPH + (n+1) H(+)(in) = a plastoquinol + NADP(+) + n H(+)(out). In terms of biological role, NDH shuttles electrons from NAD(P)H:plastoquinone, via FMN and iron-sulfur (Fe-S) centers, to quinones in the photosynthetic chain and possibly in a chloroplast respiratory chain. The immediate electron acceptor for the enzyme in this species is believed to be plastoquinone. Couples the redox reaction to proton translocation, and thus conserves the redox energy in a proton gradient. In Citrus sinensis (Sweet orange), this protein is NAD(P)H-quinone oxidoreductase subunit K, chloroplastic.